Reading from the N-terminus, the 292-residue chain is Elongation factor Ts (292 aa).

An involved in Mg(2+) ion dislocation from EF-Tu region spans residues 79–82 (TDFV).

It belongs to the EF-Ts family.

Its subcellular location is the cytoplasm. Functionally, associates with the EF-Tu.GDP complex and induces the exchange of GDP to GTP. It remains bound to the aminoacyl-tRNA.EF-Tu.GTP complex up to the GTP hydrolysis stage on the ribosome. This Metamycoplasma arthritidis (strain 158L3-1) (Mycoplasma arthritidis) protein is Elongation factor Ts.